Here is a 529-residue protein sequence, read N- to C-terminus: Bifunctional purine biosynthesis protein PurH (529 aa).

The MGS-like domain maps to 1–148 (MQQRRPVRRA…KNHRDVAIVV (148 aa)). Lys-287 is subject to N6-acetyllysine.

The protein belongs to the PurH family.

It catalyses the reaction (6R)-10-formyltetrahydrofolate + 5-amino-1-(5-phospho-beta-D-ribosyl)imidazole-4-carboxamide = 5-formamido-1-(5-phospho-D-ribosyl)imidazole-4-carboxamide + (6S)-5,6,7,8-tetrahydrofolate. The enzyme catalyses IMP + H2O = 5-formamido-1-(5-phospho-D-ribosyl)imidazole-4-carboxamide. Its pathway is purine metabolism; IMP biosynthesis via de novo pathway; 5-formamido-1-(5-phospho-D-ribosyl)imidazole-4-carboxamide from 5-amino-1-(5-phospho-D-ribosyl)imidazole-4-carboxamide (10-formyl THF route): step 1/1. The protein operates within purine metabolism; IMP biosynthesis via de novo pathway; IMP from 5-formamido-1-(5-phospho-D-ribosyl)imidazole-4-carboxamide: step 1/1. This is Bifunctional purine biosynthesis protein PurH from Escherichia coli O6:K15:H31 (strain 536 / UPEC).